A 312-amino-acid chain; its full sequence is Ribosomal RNA small subunit methyltransferase H (312 aa).

Residues 35–37 (GGH), Asp-55, Phe-79, Asp-100, and Gln-107 contribute to the S-adenosyl-L-methionine site. Residues 279–312 (LVGKSQRPGPGEVAANPRSRSAVMRVAERTGGAA) form a disordered region.

The protein belongs to the methyltransferase superfamily. RsmH family.

It is found in the cytoplasm. It catalyses the reaction cytidine(1402) in 16S rRNA + S-adenosyl-L-methionine = N(4)-methylcytidine(1402) in 16S rRNA + S-adenosyl-L-homocysteine + H(+). Functionally, specifically methylates the N4 position of cytidine in position 1402 (C1402) of 16S rRNA. The sequence is that of Ribosomal RNA small subunit methyltransferase H from Aromatoleum aromaticum (strain DSM 19018 / LMG 30748 / EbN1) (Azoarcus sp. (strain EbN1)).